A 426-amino-acid chain; its full sequence is Protein trichome birefringence-like 19 (426 aa).

The chain crosses the membrane as a helical; Signal-anchor for type II membrane protein span at residues 15–35 (LLIAVTIATSLLTIIPLLYPL). Positions 142–144 (GDS) match the GDS motif motif. A DCXHWCLPGXXDXWN motif motif is present at residues 388–402 (DCVHWCLPGPIDNLN).

This sequence belongs to the PC-esterase family. TBL subfamily.

Its subcellular location is the membrane. In terms of biological role, may act as a bridging protein that binds pectin and other cell wall polysaccharides. Probably involved in maintaining esterification of pectins. May be involved in the specific O-acetylation of cell wall polymers. The polypeptide is Protein trichome birefringence-like 19 (TBL19) (Arabidopsis thaliana (Mouse-ear cress)).